Consider the following 298-residue polypeptide: tRNA pseudouridine synthase B (298 aa).

Aspartate 42 functions as the Nucleophile in the catalytic mechanism.

The protein belongs to the pseudouridine synthase TruB family. Type 1 subfamily.

It carries out the reaction uridine(55) in tRNA = pseudouridine(55) in tRNA. Responsible for synthesis of pseudouridine from uracil-55 in the psi GC loop of transfer RNAs. The protein is tRNA pseudouridine synthase B of Mycobacterium tuberculosis (strain CDC 1551 / Oshkosh).